Here is a 122-residue protein sequence, read N- to C-terminus: Large ribosomal subunit protein uL18 (122 aa).

This sequence belongs to the universal ribosomal protein uL18 family. In terms of assembly, part of the 50S ribosomal subunit; part of the 5S rRNA/L5/L18/L25 subcomplex. Contacts the 5S and 23S rRNAs.

Functionally, this is one of the proteins that bind and probably mediate the attachment of the 5S RNA into the large ribosomal subunit, where it forms part of the central protuberance. This Desulforapulum autotrophicum (strain ATCC 43914 / DSM 3382 / VKM B-1955 / HRM2) (Desulfobacterium autotrophicum) protein is Large ribosomal subunit protein uL18.